We begin with the raw amino-acid sequence, 231 residues long: Ribose-5-phosphate isomerase A (231 aa).

Substrate is bound by residues 32–35, 85–88, and 98–101; these read TGST, DGAD, and KGGG. Glutamate 107 (proton acceptor) is an active-site residue. Lysine 125 is a substrate binding site.

The protein belongs to the ribose 5-phosphate isomerase family. Homodimer.

The catalysed reaction is aldehydo-D-ribose 5-phosphate = D-ribulose 5-phosphate. It functions in the pathway carbohydrate degradation; pentose phosphate pathway; D-ribose 5-phosphate from D-ribulose 5-phosphate (non-oxidative stage): step 1/1. In terms of biological role, catalyzes the reversible conversion of ribose-5-phosphate to ribulose 5-phosphate. This is Ribose-5-phosphate isomerase A from Paraburkholderia phymatum (strain DSM 17167 / CIP 108236 / LMG 21445 / STM815) (Burkholderia phymatum).